The sequence spans 1620 residues: uncharacterized protein (1620 aa).

The region spanning 21-96 (IRVTLKTLDD…VHLVDRGPSG (76 aa)) is the Ubiquitin-like domain. Disordered stretches follow at residues 621-648 (VATTGDAPSVPVETLPPPGSDQQPGTSR), 791-810 (TASSRNDYESVDGVEESQSD), 842-874 (RQFLENRGRIPSTSSAPSTSENPPGPSFNSEDA), 950-1016 (QVVS…NPGH), 1219-1260 (RVPG…ADPR), and 1537-1620 (IAST…NNIQ). Over residues 799–810 (ESVDGVEESQSD) the composition is skewed to acidic residues. Positions 852-871 (PSTSSAPSTSENPPGPSFNS) are enriched in polar residues. A compositionally biased stretch (polar residues) spans 1225 to 1242 (ATRNASQNTTSVNQSTET). Low complexity-rich tracts occupy residues 1537-1556 (IASTSSQPSTSSSSLNTVST) and 1583-1620 (TSLSTSSPLTSQSSSSGTRTSSGSSGPSTSSTTTNNIQ).

This is an uncharacterized protein from Caenorhabditis elegans.